The sequence spans 186 residues: Casparian strip membrane protein 3 (186 aa).

Residues 1-26 (MKAGALELGEGSKTSIPRGGVNRGIS) are Cytoplasmic-facing. Residues 27-47 (ILDFILRLITIIGTLGSAIAM) traverse the membrane as a helical segment. Residues 48–74 (GTTNETLPFFTQFTQFRAEYDDLPTFT) are Extracellular-facing. N-linked (GlcNAc...) asparagine glycosylation is present at asparagine 51. Residues 75–95 (FFVIANSIVSGYLVLSLPMSI) traverse the membrane as a helical segment. Residues 96-107 (LHIVRSGARASR) lie on the Cytoplasmic side of the membrane. The chain crosses the membrane as a helical span at residues 108 to 128 (IVLIFFDTAMLALLTAAASAA). The Extracellular portion of the chain corresponds to 129–161 (SAIVYLAHKGNAQANWFAICQQFKSFCERISGS). Residues 162 to 182 (LIGSFGGIILFILLVLLSAVA) traverse the membrane as a helical segment. Topologically, residues 183–186 (LSRC) are cytoplasmic.

The protein belongs to the Casparian strip membrane proteins (CASP) family. Homodimer and heterodimers.

It localises to the cell membrane. Regulates membrane-cell wall junctions and localized cell wall deposition. Required for establishment of the Casparian strip membrane domain (CSD) and the subsequent formation of Casparian strips, a cell wall modification of the root endodermis that determines an apoplastic barrier between the intraorganismal apoplasm and the extraorganismal apoplasm and prevents lateral diffusion. The protein is Casparian strip membrane protein 3 of Vitis vinifera (Grape).